Here is a 360-residue protein sequence, read N- to C-terminus: Phosphoserine aminotransferase (360 aa).

Arginine 42 lines the L-glutamate pocket. Residues 76–77 (AS), tryptophan 102, threonine 152, aspartate 172, and glutamine 195 each bind pyridoxal 5'-phosphate. Lysine 196 carries the post-translational modification N6-(pyridoxal phosphate)lysine. 237–238 (NT) is a pyridoxal 5'-phosphate binding site.

The protein belongs to the class-V pyridoxal-phosphate-dependent aminotransferase family. SerC subfamily. Homodimer. It depends on pyridoxal 5'-phosphate as a cofactor.

It is found in the cytoplasm. The catalysed reaction is O-phospho-L-serine + 2-oxoglutarate = 3-phosphooxypyruvate + L-glutamate. The enzyme catalyses 4-(phosphooxy)-L-threonine + 2-oxoglutarate = (R)-3-hydroxy-2-oxo-4-phosphooxybutanoate + L-glutamate. It participates in amino-acid biosynthesis; L-serine biosynthesis; L-serine from 3-phospho-D-glycerate: step 2/3. Functionally, catalyzes the reversible conversion of 3-phosphohydroxypyruvate to phosphoserine and of 3-hydroxy-2-oxo-4-phosphonooxybutanoate to phosphohydroxythreonine. This chain is Phosphoserine aminotransferase, found in Bacillus thuringiensis subsp. konkukian (strain 97-27).